A 335-amino-acid chain; its full sequence is Biotin synthase (335 aa).

A Radical SAM core domain is found at 50–279; sequence ADIQRAALLS…KARVRLSAGR (230 aa). The [4Fe-4S] cluster site is built by Cys-65, Cys-69, and Cys-72. The [2Fe-2S] cluster site is built by Cys-110, Cys-142, Cys-202, and Arg-274.

The protein belongs to the radical SAM superfamily. Biotin synthase family. Homodimer. The cofactor is [4Fe-4S] cluster. Requires [2Fe-2S] cluster as cofactor.

The catalysed reaction is (4R,5S)-dethiobiotin + (sulfur carrier)-SH + 2 reduced [2Fe-2S]-[ferredoxin] + 2 S-adenosyl-L-methionine = (sulfur carrier)-H + biotin + 2 5'-deoxyadenosine + 2 L-methionine + 2 oxidized [2Fe-2S]-[ferredoxin]. Its pathway is cofactor biosynthesis; biotin biosynthesis; biotin from 7,8-diaminononanoate: step 2/2. In terms of biological role, catalyzes the conversion of dethiobiotin (DTB) to biotin by the insertion of a sulfur atom into dethiobiotin via a radical-based mechanism. This is Biotin synthase from Methylorubrum extorquens (strain CM4 / NCIMB 13688) (Methylobacterium extorquens).